Here is a 472-residue protein sequence, read N- to C-terminus: Collagenase 3 (472 aa).

Residues 1–19 form the signal peptide; it reads MHPGVLAAFLFLSWTRCWS. The propeptide at 20-104 is activation peptide; it reads LPVPNDDDDD…PRCGVPDVGE (85 aa). Positions 95–102 match the Cysteine switch motif; that stretch reads PRCGVPDV. Cysteine 97 contributes to the Zn(2+) binding site. Asparagine 118 is a glycosylation site (N-linked (GlcNAc...) asparagine). Ca(2+) is bound at residue aspartate 129. Residues asparagine 153 and asparagine 159 are each glycosylated (N-linked (GlcNAc...) asparagine). Aspartate 163 contacts Ca(2+). Residues histidine 173 and aspartate 175 each coordinate Zn(2+). An interaction with TIMP2 region spans residues 177-247; it reads YPFDGPSGLL…GALMFPIYTY (71 aa). Ca(2+) contacts are provided by aspartate 180, glycine 181, serine 183, and leucine 185. Residue histidine 188 coordinates Zn(2+). Ca(2+)-binding residues include asparagine 195, glycine 197, and aspartate 199. Histidine 201 serves as a coordination point for Zn(2+). 3 residues coordinate Ca(2+): aspartate 203, aspartate 204, and glutamate 206. Histidine 223 contacts Zn(2+). Residue glutamate 224 is part of the active site. Positions 227, 233, and 241 each coordinate Zn(2+). An interaction with collagen region spans residues 269–472; it reads PGDEDPNPKH…VMPTNSLLWC (204 aa). Hemopexin repeat units lie at residues 282–331, 332–378, 380–428, and 429–472; these read PDKC…WPEL, PNRI…GFPK, VKKI…FPGI, and GDKV…LLWC. Cysteines 285 and 472 form a disulfide. Aspartate 292, isoleucine 294, aspartate 336, and alanine 338 together coordinate Ca(2+). Residue tyrosine 367 is modified to Phosphotyrosine; by PKDCC. Serine 384, alanine 386, aspartate 433, and valine 435 together coordinate Ca(2+).

This sequence belongs to the peptidase M10A family. The cofactor is Ca(2+). Zn(2+) serves as cofactor. Post-translationally, the proenzyme is activated by removal of the propeptide; this cleavage can be effected by other matrix metalloproteinases, such as MMP2, MMP3 and MMP14 and may involve several cleavage steps. Cleavage can also be autocatalytic, after partial maturation by another protease or after treatment with 4-aminophenylmercuric acetate (APMA) (in vitro). In terms of processing, N-glycosylated. Tyrosine phosphorylated by PKDCC/VLK. In terms of tissue distribution, seems to be specific to breast carcinomas.

It is found in the secreted. The protein localises to the extracellular space. Its subcellular location is the extracellular matrix. Plays a role in the degradation of extracellular matrix proteins including fibrillar collagen, fibronectin, TNC and ACAN. Cleaves triple helical collagens, including type I, type II and type III collagen, but has the highest activity with soluble type II collagen. Can also degrade collagen type IV, type XIV and type X. May also function by activating or degrading key regulatory proteins, such as TGFB1 and CCN2. Plays a role in wound healing, tissue remodeling, cartilage degradation, bone development, bone mineralization and ossification. Required for normal embryonic bone development and ossification. Plays a role in the healing of bone fractures via endochondral ossification. Plays a role in wound healing, probably by a mechanism that involves proteolytic activation of TGFB1 and degradation of CCN2. Plays a role in keratinocyte migration during wound healing. May play a role in cell migration and in tumor cell invasion. This is Collagenase 3 (MMP13) from Equus caballus (Horse).